The following is a 318-amino-acid chain: Pantothenate kinase (318 aa).

Residue 96 to 103 participates in ATP binding; it reads GSVAVGKS.

The protein belongs to the prokaryotic pantothenate kinase family.

The protein localises to the cytoplasm. It carries out the reaction (R)-pantothenate + ATP = (R)-4'-phosphopantothenate + ADP + H(+). The protein operates within cofactor biosynthesis; coenzyme A biosynthesis; CoA from (R)-pantothenate: step 1/5. The sequence is that of Pantothenate kinase from Coxiella burnetii (strain RSA 493 / Nine Mile phase I).